The following is an 86-amino-acid chain: Large ribosomal subunit protein bL27 (86 aa).

The protein belongs to the bacterial ribosomal protein bL27 family.

The polypeptide is Large ribosomal subunit protein bL27 (Xanthomonas oryzae pv. oryzae (strain PXO99A)).